Consider the following 92-residue polypeptide: Muscle LIM protein 1 (92 aa).

Residues 11–62 enclose the LIM zinc-binding domain; sequence CPACGKSVYAAEERVAGGYKFHKTCFKCSMCNKALDSTNCTEHEKELFCKNC. A Nuclear localization signal motif is present at residues 65-70; it reads RKYGPK.

In terms of tissue distribution, in the embryo, expression is restricted to the somatic, visceral, and pharyngeal muscles. Within the somatic musculature, MLP60 is distributed throughout the muscle fibers. There is no expression in cardiac mesoderm or in fat body.

The protein resides in the cytoplasm. Its subcellular location is the nucleus. Positive regulator of myogenesis. In Drosophila melanogaster (Fruit fly), this protein is Muscle LIM protein 1 (Mlp60A).